A 255-amino-acid chain; its full sequence is 5'-nucleotidase SurE (255 aa).

A divalent metal cation is bound by residues Asp8, Asp9, Ser40, and Asn93.

Belongs to the SurE nucleotidase family. A divalent metal cation serves as cofactor.

Its subcellular location is the cytoplasm. It catalyses the reaction a ribonucleoside 5'-phosphate + H2O = a ribonucleoside + phosphate. Nucleotidase that shows phosphatase activity on nucleoside 5'-monophosphates. The sequence is that of 5'-nucleotidase SurE from Azorhizobium caulinodans (strain ATCC 43989 / DSM 5975 / JCM 20966 / LMG 6465 / NBRC 14845 / NCIMB 13405 / ORS 571).